The following is a 468-amino-acid chain: FAD-linked oxidoreductase azaG (468 aa).

The N-terminal stretch at 1-16 (MQLSGILSWLLSWLWA) is a signal peptide. Asn44 is a glycosylation site (N-linked (GlcNAc...) asparagine). The FAD-binding PCMH-type domain maps to 54 to 228 (TVHGAPHYLG…TSATYRTHQA (175 aa)). Residues Asn272, Asn348, and Asn464 are each glycosylated (N-linked (GlcNAc...) asparagine).

This sequence belongs to the oxygen-dependent FAD-linked oxidoreductase family. It depends on FAD as a cofactor.

Its pathway is secondary metabolite biosynthesis. FAD-linked oxidoreductase; part of the gene cluster that mediates the biosynthesis of azaphilones, a class of fungal metabolites characterized by a highly oxygenated pyrano-quinone bicyclic core and exhibiting a broad range of bioactivities. In the first step, the non-reducing polyketide synthase azaA forms the hexaketide precursor from successive condensations of five malonyl-CoA units, presumably with a simple acetyl-CoA starter unit. The reactive polyketide chain then undergoes a PT-mediated C2-C7 cyclization to afford the aromatic ring and is eventually released as an aldehyde through the R-domain. The putative ketoreductase azaE is proposed to catalyze the reduction of the terminal ketone resulting in the early culture product FK17-P2a. The monooxygenase azaH was demonstrated to be the only enzyme required to convert FK17-P2a to azanigerone E. AzaH first hydroxylates the benzaldehyde intermediate FK17-P2a at C4, which triggers the formation of the pyran-ring to afford azanigerone E. In parallel, the 2,4-dimethylhexanoyl chain is synthesized by the HR-PKS azaB and is proposed to be transferred to the C4-hydroxyl of azanigerone E by the acyltransferase azaD directly from the ACP domain of azaB. Alternatively, the 2,4-dimethyl-hexanoyl chain may be offloaded from the HR-PKS as a carboxylic acid and converted to an acyl-CoA by azaF. The resulting acyl-CoA molecule could then be taken up as a substrate by AzaD to form azanigerone B. To yield the carboxylic acid substituent in azanigerone A, the hydroxypropyl side chain of azanigerone B would need to undergo a C-C oxidative cleavage catalyzed by cytochrome P450 AzaI. AzaI is proposed to act on a vicinal diol that leads to a C-C bond scission either through an alkoxyradical intermediate or a peroxy complex. In the biosynthesis of azanigerone A, azanigerone B first undergoes hydroxylation at C10, possibly catalyzed by one of the two FAD-dependent monooxygenases encoded in the cluster, azaG or azaL, resulting in the vicinal diol azanigerone C. Oxidative cleavage of azanigerone C by azaI would yield the corresponding aldehyde derivative of azanigerone A. Finally, the dehydrogenase azaJ is proposed to convert the aldehyde functional group into the carboxylic acid, completing the conversion from azanigerone B to azanigerone A. Alternatively, the oxidation of aldehyde to carboxylic acid may be catalyzed by the same P450 enzyme azaI via consecutive oxidation or by endogenous alcohol dehydrogenase. The chain is FAD-linked oxidoreductase azaG from Aspergillus niger (strain ATCC 1015 / CBS 113.46 / FGSC A1144 / LSHB Ac4 / NCTC 3858a / NRRL 328 / USDA 3528.7).